The chain runs to 259 residues: Tryptophan synthase alpha chain (259 aa).

Residues Glu35 and Asp46 each act as proton acceptor in the active site.

It belongs to the TrpA family. Tetramer of two alpha and two beta chains.

It carries out the reaction (1S,2R)-1-C-(indol-3-yl)glycerol 3-phosphate + L-serine = D-glyceraldehyde 3-phosphate + L-tryptophan + H2O. Its pathway is amino-acid biosynthesis; L-tryptophan biosynthesis; L-tryptophan from chorismate: step 5/5. Its function is as follows. The alpha subunit is responsible for the aldol cleavage of indoleglycerol phosphate to indole and glyceraldehyde 3-phosphate. The protein is Tryptophan synthase alpha chain of Methanococcus maripaludis (strain C5 / ATCC BAA-1333).